We begin with the raw amino-acid sequence, 297 residues long: Probable tyrosine phosphatase protein J2 (297 aa).

The Tyrosine-protein phosphatase domain maps to 21-286 (DSLSCIIQEY…VFCYHLIHAY (266 aa)). Residue Cys-227 is the Phosphocysteine intermediate of the active site.

This sequence belongs to the protein-tyrosine phosphatase family.

It catalyses the reaction O-phospho-L-tyrosyl-[protein] + H2O = L-tyrosyl-[protein] + phosphate. The sequence is that of Probable tyrosine phosphatase protein J2 (J3) from Microplitis demolitor (Parasitoid wasp).